The chain runs to 180 residues: Large ribosomal subunit protein uL6 (180 aa).

This sequence belongs to the universal ribosomal protein uL6 family. In terms of assembly, part of the 50S ribosomal subunit.

This protein binds to the 23S rRNA, and is important in its secondary structure. It is located near the subunit interface in the base of the L7/L12 stalk, and near the tRNA binding site of the peptidyltransferase center. The polypeptide is Large ribosomal subunit protein uL6 (Anaeromyxobacter sp. (strain Fw109-5)).